We begin with the raw amino-acid sequence, 906 residues long: Protein translocase subunit SecA (906 aa).

Residues glutamine 86, 104 to 108 (GEGKT), and aspartate 499 each bind ATP. The segment at 863–885 (PVVSRIDPKDRNPDDPTSWGRVS) is disordered. Zn(2+)-binding residues include cysteine 890, cysteine 892, cysteine 901, and histidine 902.

The protein belongs to the SecA family. In terms of assembly, monomer and homodimer. Part of the essential Sec protein translocation apparatus which comprises SecA, SecYEG and auxiliary proteins SecDF-YajC and YidC. The cofactor is Zn(2+).

The protein localises to the cell inner membrane. Its subcellular location is the cytoplasm. The catalysed reaction is ATP + H2O + cellular proteinSide 1 = ADP + phosphate + cellular proteinSide 2.. Part of the Sec protein translocase complex. Interacts with the SecYEG preprotein conducting channel. Has a central role in coupling the hydrolysis of ATP to the transfer of proteins into and across the cell membrane, serving both as a receptor for the preprotein-SecB complex and as an ATP-driven molecular motor driving the stepwise translocation of polypeptide chains across the membrane. The polypeptide is Protein translocase subunit SecA (Rickettsia akari (strain Hartford)).